The chain runs to 623 residues: Low affinity potassium transport system protein Kup (623 aa).

12 consecutive transmembrane segments (helical) span residues 10–30 (LSAV…TSPL), 47–67 (PDVV…IVSV), 102–122 (ILVI…VITP), 138–158 (PALD…LFVI), 166–186 (VGKL…LLGL), 214–234 (VSFF…ALYA), 248–268 (WFTV…ALLL), 277–297 (PFFL…ATLA), 338–358 (IYIP…IVGF), 364–384 (LAAA…VLFC), 396–416 (FFVY…FSAN), and 420–440 (LFSG…IMTT).

Belongs to the HAK/KUP transporter (TC 2.A.72) family.

The protein resides in the cell inner membrane. It catalyses the reaction K(+)(in) + H(+)(in) = K(+)(out) + H(+)(out). Functionally, responsible for the low-affinity transport of potassium into the cell. Likely operates as a K(+):H(+) symporter. The sequence is that of Low affinity potassium transport system protein Kup from Yersinia enterocolitica serotype O:8 / biotype 1B (strain NCTC 13174 / 8081).